Consider the following 490-residue polypeptide: Monocarboxylate transporter 3 (490 aa).

Residues 1–14 (MGAGGPRRGAGPPD) lie on the Cytoplasmic side of the membrane. Residues 15–35 (GGWGWVVLGACFVITGFAYGF) form a helical membrane-spanning segment. The Extracellular segment spans residues 36-58 (PKAVSVFFRELKRDFGAGYSDTA). A helical transmembrane segment spans residues 59–79 (WVSSIMLAMLYGTGPLSSILV). Over 80–85 (TRFGCR) the chain is Cytoplasmic. A helical transmembrane segment spans residues 86-106 (PVMLAGGLLASAGMILASFAS). Over 107 to 115 (RLLELYLTA) the chain is Extracellular. The chain crosses the membrane as a helical span at residues 116–136 (GVLTGLGLALNFQPSLIMLGL). At 137–147 (YFERRRPLANG) the chain is on the cytoplasmic side. Residues 148-168 (LAAAGSPVFLSTLSPLGQLLG) traverse the membrane as a helical segment. Topologically, residues 169–172 (ERFG) are extracellular. A helical transmembrane segment spans residues 173–193 (WRGGFLLFGGLLLHCCACGAV). The Cytoplasmic segment spans residues 194 to 230 (MRPPPGPQPRPDPAPPGGRARHRQLLDLAVCTDRTFM). A helical transmembrane segment spans residues 231 to 251 (VYMVTKFLMALGLFVPAILLV). Residues 252 to 257 (NYAKDA) lie on the Extracellular side of the membrane. Residues 258-278 (GVPDAEAAFLLSIVGFVDIVA) form a helical membrane-spanning segment. At 279 to 293 (RPACGALAGLGRLRP) the chain is on the cytoplasmic side. Residues 294–314 (HVPYLFSLALLANGLTDLISA) traverse the membrane as a helical segment. At 315-318 (RARS) the chain is on the extracellular side. A helical transmembrane segment spans residues 319-339 (YGTLVAFCIAFGLSYGMVGAL). At 340–352 (QFEVLMATVGAPR) the chain is on the cytoplasmic side. A helical membrane pass occupies residues 353 to 373 (FPSALGLVLLVEAVAVLIGPP). The Extracellular segment spans residues 374-386 (SAGRLVDALKNYE). The helical transmembrane segment at 387-407 (IIFYLAGSEVVLAGVFMAVTT) threads the bilayer. Residues 408–490 (YCCQRCSKDI…GGHEAHGQNA (83 aa)) lie on the Cytoplasmic side of the membrane. A disordered region spans residues 419–490 (PGPSAEGGTS…GGHEAHGQNA (72 aa)). 2 basolateral sorting signal regions span residues 426–460 (GTSD…VLSP) and 461–480 (RAGS…HESV). Positions 475–490 (LSHESVGGHEAHGQNA) are enriched in basic and acidic residues.

This sequence belongs to the major facilitator superfamily. Monocarboxylate porter (TC 2.A.1.13) family. In terms of tissue distribution, retinal pigment epithelium.

Its subcellular location is the basolateral cell membrane. The catalysed reaction is (S)-lactate(in) + H(+)(in) = (S)-lactate(out) + H(+)(out). Its function is as follows. Probable retinal pigment epithelium (RPE)-specific proton-coupled L-lactate transporter. May facilitate transport of lactate and H(+) out of the retina and could therefore play a role in pH and ion homeostasis of the outer retina. The chain is Monocarboxylate transporter 3 (Slc16a8) from Rattus norvegicus (Rat).